The following is a 757-amino-acid chain: DNA endonuclease RBBP8 (757 aa).

Residues 22–45 are essential for binding to the MRN complex and for RPA focus formation on DNA damage; the sequence is DLWTKLKEYHDKETQGLQVKVTKL. Positions 35-84 form a coiled coil; that stretch reads TQGLQVKVTKLKKERILDAQRLEEFFTKNQQLREQQKVLHETIKVLEDRL. Residues 45–160 are required for interaction with LMO4, probably by stabilizing the interaction through RPPB8 dimerization; the sequence is LKKERILDAQ…TDLESEEDVI (116 aa). Residues Lys62 and Lys115 each participate in a glycyl lysine isopeptide (Lys-Gly) (interchain with G-Cter in SUMO2) cross-link. Residues 117 to 138 adopt a coiled-coil conformation; that stretch reads ITELMNEKNTLQEENKKLSEQL. Lys193 is covalently cross-linked (Glycyl lysine isopeptide (Lys-Gly) (interchain with G-Cter in SUMO2)). The residue at position 272 (Ser272) is a Phosphoserine. Thr309 bears the Phosphothreonine mark. Ser320, Ser321, and Ser343 each carry phosphoserine. Residues 348–375 are disordered; the sequence is GKKTHLKTVPLSNTSAPGPEKPRSKSED. Glycyl lysine isopeptide (Lys-Gly) (interchain with G-Cter in SUMO2) cross-links involve residues Lys354 and Lys372. Position 373 is a phosphoserine (Ser373). Glycyl lysine isopeptide (Lys-Gly) (interchain with G-Cter in SUMO2) cross-links involve residues Lys390, Lys399, and Lys405. Positions 407 to 417 are enriched in polar residues; that stretch reads TSEPISEQGNI. The disordered stretch occupies residues 407–430; sequence TSEPISEQGNIGHSKDTDRDKHVV. The span at 419 to 429 shows a compositional bias: basic and acidic residues; the sequence is HSKDTDRDKHV. Glycyl lysine isopeptide (Lys-Gly) (interchain with G-Cter in SUMO2) cross-links involve residues Lys433 and Lys443. Residues 484–488 are PXDLS motif; the sequence is PLDLS. The PXDLS motif motif lies at 484-488; it reads PLDLS. Residues 503-551 are damage-recruitment motif; it reads CENSKIRFRQVTLYEALKPIPRDSSSSRKALSGSCGLTKDSPEEPCLQE. Lys520 participates in a covalent cross-link: Glycyl lysine isopeptide (Lys-Gly) (interchain with G-Cter in SUMO2); alternate. Residues 524–544 form a disordered region; that stretch reads RDSSSSRKALSGSCGLTKDSP. Glycyl lysine isopeptide (Lys-Gly) (interchain with G-Cter in SUMO2) cross-links involve residues Lys564 and Lys570. Lys596 participates in a covalent cross-link: Glycyl lysine isopeptide (Lys-Gly) (interchain with G-Cter in SUMO2); alternate. Glycyl lysine isopeptide (Lys-Gly) (interchain with G-Cter in SUMO2) cross-links involve residues Lys605, Lys630, and Lys632. Positions 633–677 are required for interaction with LMO4, probably by making physical contact with LMO4; it reads SLQNNQDVSFENIQWSIDPGADLSQYKMGVTVDDTKDGSQSRLAG. At Ser656 the chain carries Phosphoserine; by ATM. Residue Lys668 forms a Glycyl lysine isopeptide (Lys-Gly) (interchain with G-Cter in SUMO2) linkage. Phosphoserine is present on Ser671. Basic and acidic residues predominate over residues 696 to 728; sequence KKQEQKGEESPNGERKMNDSLEDMFDRTTHEEY. The segment at 696–757 is disordered; that stretch reads KKQEQKGEES…TTTKKPNISW (62 aa). A Glycyl lysine isopeptide (Lys-Gly) (interchain with G-Cter in SUMO2) cross-link involves residue Lys711. A Phosphoserine modification is found at Ser715. Over residues 747–757 the composition is skewed to polar residues; that stretch reads STTTKKPNISW.

The protein belongs to the COM1/SAE2/CtIP family. In terms of assembly, homotetramer; formed by antiparallel association of helical extensions protruding from the N-termini of two parallel coiled-coil dimers. Forms a dumbbell-shaped particle in which polar globular domains are held about 30 nm apart by a central rod. Homotetramerization is required for DNA-end resection and repair. Interacts (via the PXDLS motif) with CTBP1; the interaction is disrupted via binding of the adenovirus E1A to CTBP1. Component of the BRCA1-RBBP8 complex. Interacts (the Ser-321 phosphorylated form) with BRCA1 (via the C-terminal BRCT domains): the interaction occurs in the G2 phase, ubiquitinates RBBP8 and involves RBBP8 in BRCA1-dependent G2/M checkpoint control on DNA damage. Interacts with RB1. Interacts with the MRN complex. Interacts directly with MRE11; the interaction is required for efficient homologous recombination (HR) and regulation of the MRN complex. Interacts directly with RAD50. Interacts (when phosphorylated by CDK1) with NBN; promoting association with the MRN complex. Interacts with LMO4 (via the LIM zinc-binding 1 domain). Interacts with SIAH1. Interacts with RNF138. Interacts with EXD2. Interacts with CUL3 and KLHL15; this interaction leads to RBBP8 proteasomal degradation. Directly interacts with PIN1; this interaction depends upon RBBP8 phosphorylation, predominantly at Thr-309. Interacts with FZR1; this interaction leads to APC/C-mediated RBBP8 proteasomal degradation. Interacts with AUNIP; leading to recruit RBBP8 to sites of DNA damage. Interacts with SAMHD1. Interacts with HDGFL2. In terms of processing, hyperphosphorylation upon ionizing radiation results in dissociation from BRCA1. Phosphorylation by CDK1 is essential for the recruitment to DNA and the DNA repair function. Phosphorylated on Ser-321 as cells enter G2 phase. This phosphorylation is required for binding BRCA1 and for the G2/M DNA damage transition checkpoint control. Phosphorylation at Thr-309, probably catalyzed by CDK2, is required for PIN1-binding, while phosphorylation at Ser-272 serves as a PIN1 isomerization site. Phosphorylation at Thr-309 is cell-cycle dependent. It steadily increases during S phase, peaks at late S/G2 phase, and drops at G1. Phosphorylation is not required for tetramerization. Binds to DNA more strongly when dephosphorylated. Post-translationally, ubiquitinated. Ubiquitination at multiple sites by BRCA1 (via its N-terminal RING domain) does not lead to its proteasomal degradation but instead the ubiquitinated RBBP8 binds to chromatin following DNA damage and may play a role in G2/M checkpoint control. Ubiquitinated by RNF138 at its N-terminus. Ubiquitinated through 'Lys-48' by the E3 CUL3-KLHL15 complex; this modification leads to proteasomal degradation. Ubiquitinated by the E3 FZR1/APC/C complex; this modification leads to proteasomal degradation.

The protein localises to the nucleus. Its subcellular location is the chromosome. Its function is as follows. Endonuclease that cooperates with the MRE11-RAD50-NBN (MRN) complex in DNA-end resection, the first step of double-strand break (DSB) repair through the homologous recombination (HR) pathway. HR is restricted to S and G2 phases of the cell cycle and preferentially repairs DSBs resulting from replication fork collapse. Key determinant of DSB repair pathway choice, as it commits cells to HR by preventing classical non-homologous end-joining (NHEJ). Specifically promotes the endonuclease activity of the MRN complex to clear DNA ends containing protein adducts: recruited to DSBs by NBN following phosphorylation by CDK1, and promotes the endonuclease activity of MRE11 to clear protein-DNA adducts and generate clean double-strand break ends. Functions downstream of the MRN complex and ATM, promotes ATR activation and its recruitment to DSBs in the S/G2 phase facilitating the generation of ssDNA. Component of the BRCA1-RBBP8 complex that regulates CHEK1 activation and controls cell cycle G2/M checkpoints on DNA damage. During immunoglobulin heavy chain class-switch recombination, promotes microhomology-mediated alternative end joining (A-NHEJ) and plays an essential role in chromosomal translocations. Binds preferentially to DNA Y-junctions and to DNA substrates with blocked ends and promotes intermolecular DNA bridging. The protein is DNA endonuclease RBBP8 (RBBP8) of Bos taurus (Bovine).